The following is a 144-amino-acid chain: Large ribosomal subunit protein uL15 (144 aa).

Positions 1 to 56 (MELNNLKPAAGAKHAKRRVGRGIGSGLGKTAGRGHKGQKSRSGGFHKVGFEGGQMP) are disordered. Residues 21 to 31 (RGIGSGLGKTA) show a composition bias toward gly residues.

It belongs to the universal ribosomal protein uL15 family. As to quaternary structure, part of the 50S ribosomal subunit.

Its function is as follows. Binds to the 23S rRNA. The chain is Large ribosomal subunit protein uL15 from Burkholderia cenocepacia (strain HI2424).